Reading from the N-terminus, the 563-residue chain is Nicalin (563 aa).

The signal sequence occupies residues 1 to 29 (MQDEIIDFFRSPALLFYMTLMLTICVVNG). The Lumenal portion of the chain corresponds to 30–522 (SQQVGEVVET…NRLVAERVKP (493 aa)). A glycan (N-linked (GlcNAc...) asparagine) is linked at Asn232. The chain crosses the membrane as a helical span at residues 523–543 (AVFELVIAAGVFTYLSAFYYI). Topologically, residues 544-563 (ATHSQNTIEGTVAAIRKSIF) are cytoplasmic.

The protein belongs to the nicastrin family. As to quaternary structure, may interact with the levamisole-sensitive nicotinic acetylcholine receptor (L-AChR). May interact with nra-4 in the ER. In terms of tissue distribution, expressed in body wall, pharyngeal, and vulval muscles, excretory canal cell, head and motor neurons, and vulval epithelium.

Its subcellular location is the endoplasmic reticulum membrane. Involved in the recognition and selection of protein complexes to exit the endoplasmic reticulum (ER). In muscles, regulates levamisole-sensitive nicotinic acetylcholine receptor (L-AChR) subunit composition, possibly by allowing only specific L-AChR subunit combinations to exit the ER. Specifically, may promote the inclusion of alpha subunits unc-38 and unc-29 into L-AChR. Regulates L-AChR sensitivity to agonists such as nicotine and levamisole at neuro-muscular junctions. In touch neurons, may prevent ER exit of incorrectly folded mec-4-mec-10 ion channel. The chain is Nicalin from Caenorhabditis elegans.